We begin with the raw amino-acid sequence, 330 residues long: Ferredoxin--NADP reductase (330 aa).

FAD contacts are provided by Glu-35, Gln-43, Tyr-48, Val-90, Phe-123, Asp-285, and Thr-326.

This sequence belongs to the ferredoxin--NADP reductase type 2 family. As to quaternary structure, homodimer. FAD is required as a cofactor.

It catalyses the reaction 2 reduced [2Fe-2S]-[ferredoxin] + NADP(+) + H(+) = 2 oxidized [2Fe-2S]-[ferredoxin] + NADPH. This Streptococcus agalactiae serotype Ia (strain ATCC 27591 / A909 / CDC SS700) protein is Ferredoxin--NADP reductase.